The sequence spans 551 residues: Dihydroxy-acid dehydratase (551 aa).

Residue aspartate 78 coordinates Mg(2+). Cysteine 119 contacts [2Fe-2S] cluster. 2 residues coordinate Mg(2+): aspartate 120 and lysine 121. Lysine 121 carries the post-translational modification N6-carboxylysine. Cysteine 191 serves as a coordination point for [2Fe-2S] cluster. Glutamate 441 contacts Mg(2+). Serine 467 functions as the Proton acceptor in the catalytic mechanism.

Belongs to the IlvD/Edd family. Homodimer. Requires [2Fe-2S] cluster as cofactor. The cofactor is Mg(2+).

The enzyme catalyses (2R)-2,3-dihydroxy-3-methylbutanoate = 3-methyl-2-oxobutanoate + H2O. The catalysed reaction is (2R,3R)-2,3-dihydroxy-3-methylpentanoate = (S)-3-methyl-2-oxopentanoate + H2O. Its pathway is amino-acid biosynthesis; L-isoleucine biosynthesis; L-isoleucine from 2-oxobutanoate: step 3/4. It functions in the pathway amino-acid biosynthesis; L-valine biosynthesis; L-valine from pyruvate: step 3/4. Functions in the biosynthesis of branched-chain amino acids. Catalyzes the dehydration of (2R,3R)-2,3-dihydroxy-3-methylpentanoate (2,3-dihydroxy-3-methylvalerate) into 2-oxo-3-methylpentanoate (2-oxo-3-methylvalerate) and of (2R)-2,3-dihydroxy-3-methylbutanoate (2,3-dihydroxyisovalerate) into 2-oxo-3-methylbutanoate (2-oxoisovalerate), the penultimate precursor to L-isoleucine and L-valine, respectively. This is Dihydroxy-acid dehydratase from Pyrococcus furiosus (strain ATCC 43587 / DSM 3638 / JCM 8422 / Vc1).